A 465-amino-acid polypeptide reads, in one-letter code: tRNA modification GTPase MnmE (465 aa).

Residues Arg24, Glu84, and Lys127 each contribute to the (6S)-5-formyl-5,6,7,8-tetrahydrofolate site. Residues 223 to 383 (GLNIVLAGQP…LRGELLRLIG (161 aa)) form the TrmE-type G domain. Position 233 (Asn233) interacts with K(+). Residues 233-238 (NVGKSS), 252-258 (TAIAGTT), and 277-280 (DTAG) each bind GTP. Ser237 serves as a coordination point for Mg(2+). K(+) is bound by residues Thr252, Ile254, and Thr257. Thr258 contributes to the Mg(2+) binding site. Lys465 lines the (6S)-5-formyl-5,6,7,8-tetrahydrofolate pocket.

Belongs to the TRAFAC class TrmE-Era-EngA-EngB-Septin-like GTPase superfamily. TrmE GTPase family. In terms of assembly, homodimer. Heterotetramer of two MnmE and two MnmG subunits. K(+) serves as cofactor.

The protein resides in the cytoplasm. Its function is as follows. Exhibits a very high intrinsic GTPase hydrolysis rate. Involved in the addition of a carboxymethylaminomethyl (cmnm) group at the wobble position (U34) of certain tRNAs, forming tRNA-cmnm(5)s(2)U34. In Janthinobacterium sp. (strain Marseille) (Minibacterium massiliensis), this protein is tRNA modification GTPase MnmE.